We begin with the raw amino-acid sequence, 93 residues long: Large ribosomal subunit protein uL23 (93 aa).

The protein belongs to the universal ribosomal protein uL23 family. Part of the 50S ribosomal subunit. Contacts protein L29, and trigger factor when it is bound to the ribosome.

One of the early assembly proteins it binds 23S rRNA. One of the proteins that surrounds the polypeptide exit tunnel on the outside of the ribosome. Forms the main docking site for trigger factor binding to the ribosome. The protein is Large ribosomal subunit protein uL23 of Natranaerobius thermophilus (strain ATCC BAA-1301 / DSM 18059 / JW/NM-WN-LF).